We begin with the raw amino-acid sequence, 404 residues long: MKLPIYLDYSATTPVDPRVAQKMSECLLMDGNFGNPASRSHVFGWKAEEAVENARRQVAELVNADPREIVWTSGATESDNLAIKGVAHFYSGKGKHIITSKIEHKAVLDTCRQLEREGFEVTYLEPGEDGLITSALVEAALRDDTILVSVMHVNNEIGTVNDIAAIGELTRSRGVLFHVDAAQSTGKVEIDLDKLKVDLMSFSAHKTYGPKGIGALYVRRKPRVRIEGQMHGGGHERGMRSGTLATHQIVGMGEAFRIAKEEMAQENARVLALRDRFFAQIDGLEELYINGSMTSRVPHNLNVSFNYVEGESLIMALKDLAVSSGSACTSASLEPSYVLRALGRNDELAHSSIRFTFGRFTTEEEIDYAAKKVVEAVSKLRELSPLWDMYKEGVDLSQVEWQAH.

Pyridoxal 5'-phosphate contacts are provided by residues 75–76 (AT), N155, Q183, and 203–205 (SAH). Residue K206 is modified to N6-(pyridoxal phosphate)lysine. T243 serves as a coordination point for pyridoxal 5'-phosphate. C328 functions as the Cysteine persulfide intermediate in the catalytic mechanism. C328 lines the [2Fe-2S] cluster pocket.

It belongs to the class-V pyridoxal-phosphate-dependent aminotransferase family. NifS/IscS subfamily. As to quaternary structure, homodimer. Forms a heterotetramer with IscU, interacts with other sulfur acceptors. Pyridoxal 5'-phosphate is required as a cofactor.

The protein resides in the cytoplasm. The enzyme catalyses (sulfur carrier)-H + L-cysteine = (sulfur carrier)-SH + L-alanine. It functions in the pathway cofactor biosynthesis; iron-sulfur cluster biosynthesis. Its function is as follows. Master enzyme that delivers sulfur to a number of partners involved in Fe-S cluster assembly, tRNA modification or cofactor biosynthesis. Catalyzes the removal of elemental sulfur atoms from cysteine to produce alanine. Functions as a sulfur delivery protein for Fe-S cluster synthesis onto IscU, an Fe-S scaffold assembly protein, as well as other S acceptor proteins. This is Cysteine desulfurase IscS from Pseudomonas aeruginosa (strain LESB58).